The primary structure comprises 540 residues: Glucose-6-phosphate isomerase (540 aa).

The active-site Proton donor is the E350. Catalysis depends on residues H381 and K503.

Belongs to the GPI family.

It is found in the cytoplasm. The catalysed reaction is alpha-D-glucose 6-phosphate = beta-D-fructose 6-phosphate. It participates in carbohydrate biosynthesis; gluconeogenesis. It functions in the pathway carbohydrate degradation; glycolysis; D-glyceraldehyde 3-phosphate and glycerone phosphate from D-glucose: step 2/4. Catalyzes the reversible isomerization of glucose-6-phosphate to fructose-6-phosphate. The chain is Glucose-6-phosphate isomerase from Burkholderia orbicola (strain AU 1054).